Here is a 149-residue protein sequence, read N- to C-terminus: Large ribosomal subunit protein bL9 (149 aa).

Belongs to the bacterial ribosomal protein bL9 family.

Binds to the 23S rRNA. The sequence is that of Large ribosomal subunit protein bL9 from Ligilactobacillus salivarius (strain UCC118) (Lactobacillus salivarius).